The sequence spans 101 residues: Large ribosomal subunit protein uL23 (101 aa).

The protein belongs to the universal ribosomal protein uL23 family. In terms of assembly, part of the 50S ribosomal subunit. Contacts protein L29, and trigger factor when it is bound to the ribosome.

One of the early assembly proteins it binds 23S rRNA. One of the proteins that surrounds the polypeptide exit tunnel on the outside of the ribosome. Forms the main docking site for trigger factor binding to the ribosome. In Rhodococcus erythropolis (strain PR4 / NBRC 100887), this protein is Large ribosomal subunit protein uL23.